The following is a 316-amino-acid chain: Pantothenate kinase (316 aa).

95-102 (GSVAVGKS) is a binding site for ATP.

This sequence belongs to the prokaryotic pantothenate kinase family.

It localises to the cytoplasm. It catalyses the reaction (R)-pantothenate + ATP = (R)-4'-phosphopantothenate + ADP + H(+). The protein operates within cofactor biosynthesis; coenzyme A biosynthesis; CoA from (R)-pantothenate: step 1/5. This Shigella dysenteriae serotype 1 (strain Sd197) protein is Pantothenate kinase.